The primary structure comprises 242 residues: ATP synthase subunit a (242 aa).

The next 6 membrane-spanning stretches (helical) occupy residues 29–49, 84–104, 114–134, 140–160, 181–201, and 203–223; these read SSIYMLLASTLALTYFYLAFY, FIPLVFSLFIFILFCNLLGMT, IIVTFTLALLIFLTVTIVGFI, FLTLFLPQGTPVWLAPLMIVI, MAGHVLLKVIAGFTVSLMIYL, and FLPIPLIVILIGFEIFVAILQ.

This sequence belongs to the ATPase A chain family. F-type ATPases have 2 components, CF(1) - the catalytic core - and CF(0) - the membrane proton channel. CF(1) has five subunits: alpha(3), beta(3), gamma(1), delta(1), epsilon(1). CF(0) has three main subunits: a(1), b(2) and c(9-12). The alpha and beta chains form an alternating ring which encloses part of the gamma chain. CF(1) is attached to CF(0) by a central stalk formed by the gamma and epsilon chains, while a peripheral stalk is formed by the delta and b chains.

It is found in the cell inner membrane. Functionally, key component of the proton channel; it plays a direct role in the translocation of protons across the membrane. In Rickettsia typhi (strain ATCC VR-144 / Wilmington), this protein is ATP synthase subunit a.